Consider the following 156-residue polypeptide: Small ribosomal subunit protein uS7 (156 aa).

This sequence belongs to the universal ribosomal protein uS7 family. Part of the 30S ribosomal subunit. Contacts proteins S9 and S11.

One of the primary rRNA binding proteins, it binds directly to 16S rRNA where it nucleates assembly of the head domain of the 30S subunit. Is located at the subunit interface close to the decoding center, probably blocks exit of the E-site tRNA. The polypeptide is Small ribosomal subunit protein uS7 (Histophilus somni (strain 129Pt) (Haemophilus somnus)).